The primary structure comprises 82 residues: Pigment-dispersing hormone peptides (82 aa).

A signal peptide spans 1-26 (MIGKYLSWFMLAFLFGFVLESYRVQS). At Ala80 the chain carries Alanine amide.

It belongs to the arthropod PDH family. In terms of tissue distribution, expressed strongly in the head and weakly in the ventral nerve cord. Not detected in the midgut cecum or hindgut. In the cephalic neural complex, specifically localized to cells within the optic lobe, anteromedian protocerebrum, accessory lobe, tritocerebrum, and subesophageal ganglion.

Its subcellular location is the secreted. Its function is as follows. The pigment-dispersing hormone causes the migration of the distal retinal pigment into the proximal end of the pigment chromatophore cells and thus decreases the amount of light entering the retinulas. May also function as a neurotransmitter and/or neuromodulator. In Armadillidium vulgare (Pillbug), this protein is Pigment-dispersing hormone peptides.